The following is a 124-amino-acid chain: Small ribosomal subunit protein uS12 (124 aa).

Aspartate 89 is subject to 3-methylthioaspartic acid. Position 108 is an N6-acetyllysine (lysine 108).

Belongs to the universal ribosomal protein uS12 family. Part of the 30S ribosomal subunit. Contacts proteins S8 and S17. May interact with IF1 in the 30S initiation complex.

With S4 and S5 plays an important role in translational accuracy. Functionally, interacts with and stabilizes bases of the 16S rRNA that are involved in tRNA selection in the A site and with the mRNA backbone. Located at the interface of the 30S and 50S subunits, it traverses the body of the 30S subunit contacting proteins on the other side and probably holding the rRNA structure together. The combined cluster of proteins S8, S12 and S17 appears to hold together the shoulder and platform of the 30S subunit. The sequence is that of Small ribosomal subunit protein uS12 from Escherichia coli (strain K12 / MC4100 / BW2952).